The sequence spans 152 residues: Protein CHLOROPLAST VESICULATION (152 aa).

The transit peptide at 1-22 (MAGRISCCLNLPPLDSNSAQSL) directs the protein to the chloroplast. The chain crosses the membrane as a helical span at residues 48-65 (CSFVLGVAATVVIGGIQI). The segment at 92–152 (RWSDKRTCPP…RVNRGGCFSV (61 aa)) is important for chloroplast destabilization and the formation of CV-containing vesicles.

Interacts with the photosystem II subunit PsbO1 via its C-terminal region in the chloroplast thylakoid membrane and in CV-containing vesicles (CCVs). In terms of tissue distribution, mostly expressed in senescent and mature leaves but not in young leaves.

It is found in the plastid. The protein localises to the chloroplast membrane. It localises to the chloroplast thylakoid membrane. Its subcellular location is the chloroplast envelope. The protein resides in the vacuole. It is found in the vesicle. Functionally, triggers stress-induced chloroplast degradation, independently of autophagy and senescence-associated vacuoles. After targeting to the chloroplast, triggers its destabilization and subsequent disassembly, inducing the formation of CV-containing vesicles (CCVs) carrying stromal proteins, envelope membrane proteins, and thylakoid membrane proteins which are released from the chloroplasts and mobilized to the vacuole for proteolysis. This is Protein CHLOROPLAST VESICULATION from Arabidopsis thaliana (Mouse-ear cress).